A 390-amino-acid chain; its full sequence is NADH-quinone oxidoreductase subunit D (390 aa).

Belongs to the complex I 49 kDa subunit family. In terms of assembly, NDH-1 is composed of 14 different subunits. Subunits NuoB, C, D, E, F, and G constitute the peripheral sector of the complex.

The protein resides in the cell membrane. The catalysed reaction is a quinone + NADH + 5 H(+)(in) = a quinol + NAD(+) + 4 H(+)(out). In terms of biological role, NDH-1 shuttles electrons from NADH, via FMN and iron-sulfur (Fe-S) centers, to quinones in the respiratory chain. The immediate electron acceptor for the enzyme in this species is believed to be ubiquinone. Couples the redox reaction to proton translocation (for every two electrons transferred, four hydrogen ions are translocated across the cytoplasmic membrane), and thus conserves the redox energy in a proton gradient. This chain is NADH-quinone oxidoreductase subunit D, found in Wolbachia sp. subsp. Brugia malayi (strain TRS).